The sequence spans 729 residues: Phenylalanine ammonia-lyase (729 aa).

Catalysis depends on Y77, which acts as the Proton donor/acceptor. Residues 182 to 184 (ASG) constitute a cross-link (5-imidazolinone (Ala-Gly)). S183 carries the post-translational modification 2,3-didehydroalanine (Ser). N241, Q336, R342, N372, K443, E471, and N474 together coordinate (E)-cinnamate.

This sequence belongs to the PAL/histidase family. Contains an active site 4-methylidene-imidazol-5-one (MIO), which is formed autocatalytically by cyclization and dehydration of residues Ala-Ser-Gly.

It is found in the cytoplasm. The catalysed reaction is L-phenylalanine = (E)-cinnamate + NH4(+). It functions in the pathway secondary metabolite biosynthesis. It participates in phenylpropanoid metabolism; trans-cinnamate biosynthesis; trans-cinnamate from L-phenylalanine: step 1/1. Its function is as follows. Phenylalanine ammonia-lyase; part of the gene cluster that mediates the biosynthesis of squalestatin S1 (SQS1, also known as zaragozic acid A), a heavily oxidized fungal polyketide that offers potent cholesterol lowering activity by targeting squalene synthase (SS). SQS1 is composed of a 2,8-dioxobicyclic[3.2.1]octane-3,4,5-tricarboxyclic acid core that is connected to two lipophilic polyketide arms. These initial steps feature the priming of an unusual benzoic acid starter unit onto the highly reducing polyketide synthase pks2, followed by oxaloacetate extension and product release to generate a tricarboxylic acid containing product. The phenylalanine ammonia lyase (PAL) M7 and the acyl-CoA ligase M9 are involved in transforming phenylalanine into benzoyl-CoA. The citrate synthase-like protein R3 is involved in connecting the C-alpha-carbons of the hexaketide chain and oxaloacetate to afford the tricarboxylic acid unit. The potential hydrolytic enzymes, M8 and M10, are in close proximity to pks2 and may participate in product release. On the other side, the tetraketide arm is synthesized by a the squalestatin tetraketide synthase pks1 and enzymatically esterified to the core in the last biosynthetic step, by the acetyltransferase M4. The biosynthesis of the tetraketide must involve 3 rounds of chain extension. After the first and second rounds methyl-transfer occurs, and in all rounds of extension the ketoreductase and dehydratase are active. The enoyl reductase and C-MeT of pks1 are not active in the final round of extension. The acetyltransferase M4 appears to have a broad substrate selectivity for its acyl CoA substrate, allowing the in vitro synthesis of novel squalestatins. The biosynthesis of SQS1 requires several oxidative steps likely performed by oxidoreductases M1, R1 and R2. Finally, in support of the identification of the cluster as being responsible for SQS1 production, the cluster contains a gene encoding a putative squalene synthase (SS) R6, suggesting a likely mechanism for self-resistance. The protein is Phenylalanine ammonia-lyase of Phoma sp. (strain ATCC 20986 / MF5453).